A 450-amino-acid polypeptide reads, in one-letter code: Probable glycine dehydrogenase (decarboxylating) subunit 1 (450 aa).

This sequence belongs to the GcvP family. N-terminal subunit subfamily. The glycine cleavage system is composed of four proteins: P, T, L and H. In this organism, the P 'protein' is a heterodimer of two subunits.

The catalysed reaction is N(6)-[(R)-lipoyl]-L-lysyl-[glycine-cleavage complex H protein] + glycine + H(+) = N(6)-[(R)-S(8)-aminomethyldihydrolipoyl]-L-lysyl-[glycine-cleavage complex H protein] + CO2. In terms of biological role, the glycine cleavage system catalyzes the degradation of glycine. The P protein binds the alpha-amino group of glycine through its pyridoxal phosphate cofactor; CO(2) is released and the remaining methylamine moiety is then transferred to the lipoamide cofactor of the H protein. This chain is Probable glycine dehydrogenase (decarboxylating) subunit 1, found in Brevibacillus brevis (strain 47 / JCM 6285 / NBRC 100599).